Consider the following 312-residue polypeptide: Olfactory receptor 14C36 (312 aa).

Over 1–23 the chain is Extracellular; that stretch reads MPNSTTVMEFLLMRFSDVWTLQI. N-linked (GlcNAc...) asparagine glycosylation occurs at Asn3. A helical transmembrane segment spans residues 24 to 44; that stretch reads LHSASFFMLYLVTLMGNILIV. The Cytoplasmic portion of the chain corresponds to 45-52; that stretch reads TVTTCDSS. The helical transmembrane segment at 53–73 threads the bilayer; sequence LHMPMYFFLRNLSILDACYIS. The Extracellular portion of the chain corresponds to 74 to 97; it reads VTVPTSCVNSLLDSTTISKAGCVA. Cys95 and Cys187 are joined by a disulfide. Residues 98-118 traverse the membrane as a helical segment; sequence QVFLVVFFVYVELLFLTIMAH. Residues 119–137 are Cytoplasmic-facing; it reads DRYVAVCQPLHYPVIVNSR. The helical transmembrane segment at 138–158 threads the bilayer; it reads ICIQMTLASLLSGLVYAGMHT. The Extracellular segment spans residues 159 to 194; that stretch reads GSTFQLPFCRSNVIHQFFCDIPSLLKLSCSDTFSNE. Residues 195-215 form a helical membrane-spanning segment; that stretch reads VMIVVSALGVGGGCFIFIIRS. Over 216–235 the chain is Cytoplasmic; that stretch reads YIHIFSTVLGFPRGADRTKA. The chain crosses the membrane as a helical span at residues 236-256; that stretch reads FSTCIPHILVVSVFLSSCSSV. Topologically, residues 257–269 are extracellular; sequence YLRPPAIPAATQD. The chain crosses the membrane as a helical span at residues 270 to 290; that stretch reads LILSGFYSIMPPLFNPIIYSL. Over 291 to 312 the chain is Cytoplasmic; the sequence is RNKQIKVAIKKIMKRIFYSENV.

The protein belongs to the G-protein coupled receptor 1 family.

The protein resides in the cell membrane. Its function is as follows. Odorant receptor. The chain is Olfactory receptor 14C36 (OR14C36) from Homo sapiens (Human).